A 217-amino-acid chain; its full sequence is Sentrin-specific protease 8 (217 aa).

The residue at position 1 (Met1) is an N-acetylmethionine. A protease region spans residues Ser11–Leu174. Active-site residues include His102 and Asp119. Residue Cys163 is the Nucleophile of the active site.

Belongs to the peptidase C48 family.

Functionally, protease that catalyzes two essential functions in the NEDD8 pathway: processing of full-length NEDD8 to its mature form and deconjugation of NEDD8 from targeted proteins such as cullins or p53. This chain is Sentrin-specific protease 8 (Senp8), found in Rattus norvegicus (Rat).